Consider the following 365-residue polypeptide: Flagellar P-ring protein 2 (365 aa).

The first 19 residues, 1 to 19, serve as a signal peptide directing secretion; sequence MKKWIVMASLLLAALPAMS.

It belongs to the FlgI family. In terms of assembly, the basal body constitutes a major portion of the flagellar organelle and consists of four rings (L,P,S, and M) mounted on a central rod.

Its subcellular location is the periplasm. It is found in the bacterial flagellum basal body. Functionally, assembles around the rod to form the L-ring and probably protects the motor/basal body from shearing forces during rotation. This Chromobacterium violaceum (strain ATCC 12472 / DSM 30191 / JCM 1249 / CCUG 213 / NBRC 12614 / NCIMB 9131 / NCTC 9757 / MK) protein is Flagellar P-ring protein 2.